A 444-amino-acid polypeptide reads, in one-letter code: N-succinylarginine dihydrolase (444 aa).

Residues 19–28, Asn110, and 137–138 contribute to the substrate site; these read AGLSFGNVAS and HR. Glu174 is a catalytic residue. Arg214 is a substrate binding site. His250 is an active-site residue. Substrate-binding residues include Asp252 and Asn362. Cys368 serves as the catalytic Nucleophile.

Belongs to the succinylarginine dihydrolase family. In terms of assembly, homodimer.

The catalysed reaction is N(2)-succinyl-L-arginine + 2 H2O + 2 H(+) = N(2)-succinyl-L-ornithine + 2 NH4(+) + CO2. Its pathway is amino-acid degradation; L-arginine degradation via AST pathway; L-glutamate and succinate from L-arginine: step 2/5. Its function is as follows. Catalyzes the hydrolysis of N(2)-succinylarginine into N(2)-succinylornithine, ammonia and CO(2). The sequence is that of N-succinylarginine dihydrolase from Shewanella frigidimarina (strain NCIMB 400).